The sequence spans 514 residues: 2,3-bisphosphoglycerate-independent phosphoglycerate mutase (514 aa).

D14 and S64 together coordinate Mn(2+). S64 functions as the Phosphoserine intermediate in the catalytic mechanism. Substrate-binding positions include H125, 155–156, R187, R193, 263–266, and K336; these read RD and RADR. Residues D403, H407, D444, H445, and H463 each coordinate Mn(2+).

The protein belongs to the BPG-independent phosphoglycerate mutase family. In terms of assembly, monomer. The cofactor is Mn(2+).

The enzyme catalyses (2R)-2-phosphoglycerate = (2R)-3-phosphoglycerate. The protein operates within carbohydrate degradation; glycolysis; pyruvate from D-glyceraldehyde 3-phosphate: step 3/5. Insensitive to vanadate. Catalyzes the interconversion of 2-phosphoglycerate (2-PGA) and 3-phosphoglycerate (3-PGA). This chain is 2,3-bisphosphoglycerate-independent phosphoglycerate mutase, found in Escherichia coli (strain K12).